We begin with the raw amino-acid sequence, 752 residues long: Granule-bound starch synthase 2, chloroplastic/amyloplastic (752 aa).

The N-terminal 57 residues, 1-57 (MMLSLGSDATVLPFHAKNLKFTPKLSTLNGDLAFSKGLGVGRLNCGSVRLNHKQHVR), are a transit peptide targeting the chloroplast. 2 disordered regions span residues 116-146 (LEGNGVSYESSEKSLSRDSNPQKGSSSSGSA) and 224-253 (FENFEGANEPSSKEVANEAENFESGGEKPP). Lysine 275 is an ADP-alpha-D-glucose binding site.

Belongs to the glycosyltransferase 1 family. Bacterial/plant glycogen synthase subfamily. In terms of tissue distribution, widely expressed.

It is found in the plastid. It localises to the chloroplast. The protein resides in the amyloplast. The enzyme catalyses [(1-&gt;4)-alpha-D-glucosyl](n) + ADP-alpha-D-glucose = [(1-&gt;4)-alpha-D-glucosyl](n+1) + ADP + H(+). Its pathway is glycan biosynthesis; starch biosynthesis. The polypeptide is Granule-bound starch synthase 2, chloroplastic/amyloplastic (Pisum sativum (Garden pea)).